The following is a 175-amino-acid chain: Arginine repressor (175 aa).

A disordered region spans residues 1–23 (MSVSTPERGGAEQGKGPAIARTR).

It belongs to the ArgR family.

Its subcellular location is the cytoplasm. It participates in amino-acid biosynthesis; L-arginine biosynthesis [regulation]. In terms of biological role, regulates arginine biosynthesis genes. The polypeptide is Arginine repressor (Nocardia farcinica (strain IFM 10152)).